Consider the following 203-residue polypeptide: dITP/XTP pyrophosphatase (203 aa).

Position 7 to 12 (7 to 12) interacts with substrate; it reads SGNLHK. Residues Glu-47 and Asp-77 each coordinate Mg(2+). Catalysis depends on Asp-77, which acts as the Proton acceptor. Substrate-binding positions include Ser-78, 160-163, Lys-183, and 188-189; these read FGYD and HR.

Belongs to the HAM1 NTPase family. Homodimer. It depends on Mg(2+) as a cofactor.

It carries out the reaction XTP + H2O = XMP + diphosphate + H(+). The enzyme catalyses dITP + H2O = dIMP + diphosphate + H(+). The catalysed reaction is ITP + H2O = IMP + diphosphate + H(+). Functionally, pyrophosphatase that catalyzes the hydrolysis of nucleoside triphosphates to their monophosphate derivatives, with a high preference for the non-canonical purine nucleotides XTP (xanthosine triphosphate), dITP (deoxyinosine triphosphate) and ITP. Seems to function as a house-cleaning enzyme that removes non-canonical purine nucleotides from the nucleotide pool, thus preventing their incorporation into DNA/RNA and avoiding chromosomal lesions. The chain is dITP/XTP pyrophosphatase from Opitutus terrae (strain DSM 11246 / JCM 15787 / PB90-1).